A 75-amino-acid polypeptide reads, in one-letter code: ATP synthase subunit c (75 aa).

Helical transmembrane passes span 12–32 (LASI…GIVV) and 49–69 (LTVL…IGIG).

This sequence belongs to the ATPase C chain family. In terms of assembly, F-type ATPases have 2 components, F(1) - the catalytic core - and F(0) - the membrane proton channel. F(1) has five subunits: alpha(3), beta(3), gamma(1), delta(1), epsilon(1). F(0) has three main subunits: a(1), b(2) and c(10-14). The alpha and beta chains form an alternating ring which encloses part of the gamma chain. F(1) is attached to F(0) by a central stalk formed by the gamma and epsilon chains, while a peripheral stalk is formed by the delta and b chains.

It localises to the cell membrane. Its function is as follows. F(1)F(0) ATP synthase produces ATP from ADP in the presence of a proton or sodium gradient. F-type ATPases consist of two structural domains, F(1) containing the extramembraneous catalytic core and F(0) containing the membrane proton channel, linked together by a central stalk and a peripheral stalk. During catalysis, ATP synthesis in the catalytic domain of F(1) is coupled via a rotary mechanism of the central stalk subunits to proton translocation. Key component of the F(0) channel; it plays a direct role in translocation across the membrane. A homomeric c-ring of between 10-14 subunits forms the central stalk rotor element with the F(1) delta and epsilon subunits. In Tropheryma whipplei (strain TW08/27) (Whipple's bacillus), this protein is ATP synthase subunit c.